Consider the following 179-residue polypeptide: Plasmid-derived single-stranded DNA-binding protein (179 aa).

The SSB domain maps to 6 to 110 (INKVILVGRL…ILVKTTGTMQ (105 aa)). A DNA-binding region spans residues 55 to 61 (WHRVVLF). Positions 117-179 (GAQTQPEEGQ…DYGFSDDIPF (63 aa)) are disordered. Residues 118–132 (AQTQPEEGQQFSGQP) are compositionally biased toward polar residues. Positions 145-155 (GGAKTKGRGRK) are enriched in basic residues. Over residues 167 to 179 (EGDDYGFSDDIPF) the composition is skewed to acidic residues.

Homotetramer.

In terms of biological role, may contribute to the conjugative processing of DNA. It has a functional relationship with Psi (plasmid-mediated sos inhibition) proteins. This is Plasmid-derived single-stranded DNA-binding protein (ssbF) from Escherichia coli (strain K12).